A 220-amino-acid polypeptide reads, in one-letter code: Glutamine amidotransferase-like class 1 domain-containing protein 1 (220 aa).

The signal sequence occupies residues 1–38; it reads MASERLPNRPACLLVASGAAEGVSAQSFLHCFTMASTA. Asn201 carries N-linked (GlcNAc...) asparagine glycosylation.

This sequence belongs to the peptidase C56 family. Homotetramer. Component of the FERRY complex composed of five subunits, TBCK, PPP1R21, FERRY3, CRYZL1 and GATD1 with a ratio of 1:2:1:2:4, respectively.

Its subcellular location is the secreted. The protein localises to the early endosome. Its function is as follows. Component of the FERRY complex (Five-subunit Endosomal Rab5 and RNA/ribosome intermediary). The FERRY complex directly interacts with mRNAs and RAB5A, and functions as a RAB5A effector involved in the localization and the distribution of specific mRNAs most likely by mediating their endosomal transport. The complex recruits mRNAs and ribosomes to early endosomes through direct mRNA-interaction. The protein is Glutamine amidotransferase-like class 1 domain-containing protein 1 of Homo sapiens (Human).